Consider the following 121-residue polypeptide: MIQVESRLTVCDNSGAKEALCIRVLGGTKRRYASVGDVIVVSIKSVIPSSDVKKGAVSKALIVRTKKEIRRADGSYIRFDDNACVLLNNAGEIRGSRIFGPVARELRAANMKVVSLAPEVL.

Belongs to the universal ribosomal protein uL14 family. Part of the 50S ribosomal subunit. Forms a cluster with proteins L3 and L19. In the 70S ribosome, L14 and L19 interact and together make contacts with the 16S rRNA in bridges B5 and B8.

Its function is as follows. Binds to 23S rRNA. Forms part of two intersubunit bridges in the 70S ribosome. This is Large ribosomal subunit protein uL14 from Phocaeicola vulgatus (strain ATCC 8482 / DSM 1447 / JCM 5826 / CCUG 4940 / NBRC 14291 / NCTC 11154) (Bacteroides vulgatus).